Here is a 475-residue protein sequence, read N- to C-terminus: Ribulose bisphosphate carboxylase large chain (475 aa).

The propeptide occupies 1-2; that stretch reads MS. P3 carries the N-acetylproline modification. Residue K14 is modified to N6,N6,N6-trimethyllysine. Substrate contacts are provided by N123 and T173. Residue K175 is the Proton acceptor of the active site. K177 is a binding site for substrate. Mg(2+)-binding residues include K201, D203, and E204. The residue at position 201 (K201) is an N6-carboxylysine. H294 serves as the catalytic Proton acceptor. Substrate-binding residues include R295, H327, and S379.

This sequence belongs to the RuBisCO large chain family. Type I subfamily. In terms of assembly, heterohexadecamer of 8 large chains and 8 small chains; disulfide-linked. The disulfide link is formed within the large subunit homodimers. It depends on Mg(2+) as a cofactor. In terms of processing, the disulfide bond which can form in the large chain dimeric partners within the hexadecamer appears to be associated with oxidative stress and protein turnover.

The protein resides in the plastid. It localises to the chloroplast. It carries out the reaction 2 (2R)-3-phosphoglycerate + 2 H(+) = D-ribulose 1,5-bisphosphate + CO2 + H2O. The catalysed reaction is D-ribulose 1,5-bisphosphate + O2 = 2-phosphoglycolate + (2R)-3-phosphoglycerate + 2 H(+). Its function is as follows. RuBisCO catalyzes two reactions: the carboxylation of D-ribulose 1,5-bisphosphate, the primary event in carbon dioxide fixation, as well as the oxidative fragmentation of the pentose substrate in the photorespiration process. Both reactions occur simultaneously and in competition at the same active site. This is Ribulose bisphosphate carboxylase large chain from Pinus longaeva (Great Basin bristlecone pine).